Here is a 338-residue protein sequence, read N- to C-terminus: MKVFYDKDADLSLIKGKNVTIIGYGSQGHAHALNLKDSGVNVTVGLRKSGASWNKAANAGLQVKEVAEAVKGADVVMILLPDEQIADVYKNEVHDNIKEGAALAFAHGFNVHYGAVIPRADLDVIMIAPKAPGHTVRATYTQGGGVPHLIAVHQNKSGAARDIALSYATANGGGRAGIIETNFREETETDLFGEQAVLCGGTVELIKAGFETLVEAGYAPEMAYFECLHELKLIVDLIYEGGIANMNYSISNNAEYGEYVTGPRVVTEETKKAMKQCLTDIQTGEYAKSFLLENKAGAPTLISRRRLTAEHQIEEVGAKLRAMMPWIAKNKMVDQSKN.

The region spanning 1–181 (MKVFYDKDAD…GGGRAGIIET (181 aa)) is the KARI N-terminal Rossmann domain. NADP(+) is bound by residues 24–27 (YGSQ), arginine 47, and serine 52. Histidine 107 is a catalytic residue. NADP(+) is bound at residue glycine 133. Residues 182 to 327 (NFREETETDL…AKLRAMMPWI (146 aa)) form the KARI C-terminal knotted domain. The Mg(2+) site is built by aspartate 190, glutamate 194, glutamate 226, and glutamate 230. Substrate is bound at residue serine 251.

It belongs to the ketol-acid reductoisomerase family. Requires Mg(2+) as cofactor.

The catalysed reaction is (2R)-2,3-dihydroxy-3-methylbutanoate + NADP(+) = (2S)-2-acetolactate + NADPH + H(+). It carries out the reaction (2R,3R)-2,3-dihydroxy-3-methylpentanoate + NADP(+) = (S)-2-ethyl-2-hydroxy-3-oxobutanoate + NADPH + H(+). It participates in amino-acid biosynthesis; L-isoleucine biosynthesis; L-isoleucine from 2-oxobutanoate: step 2/4. It functions in the pathway amino-acid biosynthesis; L-valine biosynthesis; L-valine from pyruvate: step 2/4. Involved in the biosynthesis of branched-chain amino acids (BCAA). Catalyzes an alkyl-migration followed by a ketol-acid reduction of (S)-2-acetolactate (S2AL) to yield (R)-2,3-dihydroxy-isovalerate. In the isomerase reaction, S2AL is rearranged via a Mg-dependent methyl migration to produce 3-hydroxy-3-methyl-2-ketobutyrate (HMKB). In the reductase reaction, this 2-ketoacid undergoes a metal-dependent reduction by NADPH to yield (R)-2,3-dihydroxy-isovalerate. This is Ketol-acid reductoisomerase (NADP(+)) from Cupriavidus necator (strain ATCC 17699 / DSM 428 / KCTC 22496 / NCIMB 10442 / H16 / Stanier 337) (Ralstonia eutropha).